Here is a 336-residue protein sequence, read N- to C-terminus: Ribosomal RNA large subunit methyltransferase F (336 aa).

It belongs to the methyltransferase superfamily. METTL16/RlmF family.

Its subcellular location is the cytoplasm. The enzyme catalyses adenosine(1618) in 23S rRNA + S-adenosyl-L-methionine = N(6)-methyladenosine(1618) in 23S rRNA + S-adenosyl-L-homocysteine + H(+). Its function is as follows. Specifically methylates the adenine in position 1618 of 23S rRNA. The chain is Ribosomal RNA large subunit methyltransferase F from Yersinia pestis bv. Antiqua (strain Angola).